The primary structure comprises 320 residues: HPr kinase/phosphorylase (320 aa).

Catalysis depends on residues His-141 and Lys-162. Position 156 to 163 (156 to 163) interacts with ATP; that stretch reads GHSGLGKS. Ser-163 contacts Mg(2+). Asp-180 acts as the Proton acceptor; for phosphorylation activity. Proton donor; for dephosphorylation activity in catalysis. Positions 204 to 213 are important for the catalytic mechanism of both phosphorylation and dephosphorylation; the sequence is LEVRGLGILN. Mg(2+) is bound at residue Glu-205. Arg-248 is an active-site residue. Residues 269–274 are important for the catalytic mechanism of dephosphorylation; the sequence is PVAVGR.

This sequence belongs to the HPrK/P family. In terms of assembly, homohexamer. Requires Mg(2+) as cofactor.

It carries out the reaction [HPr protein]-L-serine + ATP = [HPr protein]-O-phospho-L-serine + ADP + H(+). The catalysed reaction is [HPr protein]-O-phospho-L-serine + phosphate + H(+) = [HPr protein]-L-serine + diphosphate. Functionally, catalyzes the ATP- as well as the pyrophosphate-dependent phosphorylation of a specific serine residue in HPr, a phosphocarrier protein of the phosphoenolpyruvate-dependent sugar phosphotransferase system (PTS). HprK/P also catalyzes the pyrophosphate-producing, inorganic phosphate-dependent dephosphorylation (phosphorolysis) of seryl-phosphorylated HPr (P-Ser-HPr). This Neisseria meningitidis serogroup A / serotype 4A (strain DSM 15465 / Z2491) protein is HPr kinase/phosphorylase.